The sequence spans 278 residues: Small ribosomal subunit protein uS9m (278 aa).

Residues Met-1–Arg-10 constitute a mitochondrion transit peptide. The interval Val-259–Arg-278 is disordered.

Belongs to the universal ribosomal protein uS9 family. In terms of assembly, component of the mitochondrial small ribosomal subunit (mt-SSU). Mature yeast 74S mitochondrial ribosomes consist of a small (37S) and a large (54S) subunit. The 37S small subunit contains a 15S ribosomal RNA (15S mt-rRNA) and 34 different proteins. The 54S large subunit contains a 21S rRNA (21S mt-rRNA) and 46 different proteins.

Its subcellular location is the mitochondrion. Functionally, component of the mitochondrial ribosome (mitoribosome), a dedicated translation machinery responsible for the synthesis of mitochondrial genome-encoded proteins, including at least some of the essential transmembrane subunits of the mitochondrial respiratory chain. The mitoribosomes are attached to the mitochondrial inner membrane and translation products are cotranslationally integrated into the membrane. The chain is Small ribosomal subunit protein uS9m (MRPS9) from Saccharomyces cerevisiae (strain ATCC 204508 / S288c) (Baker's yeast).